We begin with the raw amino-acid sequence, 313 residues long: WD repeat-containing protein 82-A (313 aa).

WD repeat units lie at residues 19-58 (ENSDKINCFDFSPTGETVISSSDDDSIVLYDCQEGKPKRT), 105-144 (GHSKRVVALSMSPVDDTFISASLDKTIRLWDLRSPNCQGL), 146-184 (HLQGKPVCSFDPEGLIFAAGVNSEMVKLYDLRSFDKGPF), 192-231 (DRTCEWTSLKFSQDGKLILMSTNGGFLRLVDAFKGAVMHT), 236-276 (NNSK…KVAV), and 280-313 (KHTGPITCLQFNPKFMTFASACSNMAFWLPTIDD).

This sequence belongs to the WD repeat SWD2 family. As to quaternary structure, component of the SET1/COMPASS complex. Component of the PNUTS-PP1 phosphatase complex.

It is found in the nucleus. Its subcellular location is the chromosome. The protein resides in the cytoplasm. In terms of biological role, regulatory component of the SET1/COMPASS complex implicated in the tethering of this complex to transcriptional start sites of active genes. Facilitates histone H3 'Lys-4' methylation (H3K4me) via recruitment of the SETD1A or SETD1B to the 'Ser-5' phosphorylated C-terminal domain (CTD) of RNA polymerase II large subunit (POLR2A). Component of the PNUTS-PP1 protein phosphatase complex, a protein phosphatase 1 (PP1) complex that promotes RNA polymerase II transcription pause-release, allowing transcription elongation. The polypeptide is WD repeat-containing protein 82-A (wdr82-a) (Xenopus laevis (African clawed frog)).